The sequence spans 421 residues: Testin (421 aa).

In terms of domain architecture, PET spans Met-92–Asp-199. A disordered region spans residues Gln-135–His-165. Residues Leu-154–His-165 show a composition bias toward basic and acidic residues. LIM zinc-binding domains are found at residues Tyr-234 to Glu-297, Pro-299 to Val-359, and Gln-362 to Ser-421.

Belongs to the prickle / espinas / testin family. In terms of assembly, interacts via LIM domain 1 with ZYX. Interacts (via LIM domain 3) with ENAH and VASP. Interacts with ALKBH4, talin, actin, alpha-actinin, GRIP1 and PXN. Interacts (via LIM domain 2) with ACTL7A (via N-terminus). Heterodimer with ACTL7A; the heterodimer interacts with ENAH to form a heterotrimer.

The protein localises to the cytoplasm. It is found in the cell junction. It localises to the focal adhesion. In terms of biological role, scaffold protein that may play a role in cell adhesion, cell spreading and in the reorganization of the actin cytoskeleton. Plays a role in the regulation of cell proliferation. May act as a tumor suppressor. This Dasypus novemcinctus (Nine-banded armadillo) protein is Testin (TES).